The primary structure comprises 451 residues: Trigger factor (451 aa).

The PPIase FKBP-type domain maps to 173 to 258; it reads GDRVTVDFVG…LKKVEWAHLP (86 aa).

The protein belongs to the FKBP-type PPIase family. Tig subfamily.

It localises to the cytoplasm. It catalyses the reaction [protein]-peptidylproline (omega=180) = [protein]-peptidylproline (omega=0). Functionally, involved in protein export. Acts as a chaperone by maintaining the newly synthesized protein in an open conformation. Functions as a peptidyl-prolyl cis-trans isomerase. The chain is Trigger factor from Cupriavidus taiwanensis (strain DSM 17343 / BCRC 17206 / CCUG 44338 / CIP 107171 / LMG 19424 / R1) (Ralstonia taiwanensis (strain LMG 19424)).